Reading from the N-terminus, the 143-residue chain is Nucleoside diphosphate kinase (143 aa).

ATP-binding residues include K11, F59, R87, T93, R104, and N114. H117 functions as the Pros-phosphohistidine intermediate in the catalytic mechanism.

Belongs to the NDK family. In terms of assembly, homotetramer. It depends on Mg(2+) as a cofactor.

The protein localises to the cytoplasm. The enzyme catalyses a 2'-deoxyribonucleoside 5'-diphosphate + ATP = a 2'-deoxyribonucleoside 5'-triphosphate + ADP. It carries out the reaction a ribonucleoside 5'-diphosphate + ATP = a ribonucleoside 5'-triphosphate + ADP. Major role in the synthesis of nucleoside triphosphates other than ATP. The ATP gamma phosphate is transferred to the NDP beta phosphate via a ping-pong mechanism, using a phosphorylated active-site intermediate. The sequence is that of Nucleoside diphosphate kinase from Alcanivorax borkumensis (strain ATCC 700651 / DSM 11573 / NCIMB 13689 / SK2).